A 302-amino-acid chain; its full sequence is Sulfate adenylyltransferase subunit 2 (302 aa).

Belongs to the PAPS reductase family. CysD subfamily. In terms of assembly, heterodimer composed of CysD, the smaller subunit, and CysN.

It catalyses the reaction sulfate + ATP + H(+) = adenosine 5'-phosphosulfate + diphosphate. The protein operates within sulfur metabolism; hydrogen sulfide biosynthesis; sulfite from sulfate: step 1/3. Functionally, with CysN forms the ATP sulfurylase (ATPS) that catalyzes the adenylation of sulfate producing adenosine 5'-phosphosulfate (APS) and diphosphate, the first enzymatic step in sulfur assimilation pathway. APS synthesis involves the formation of a high-energy phosphoric-sulfuric acid anhydride bond driven by GTP hydrolysis by CysN coupled to ATP hydrolysis by CysD. The chain is Sulfate adenylyltransferase subunit 2 from Escherichia coli O7:K1 (strain IAI39 / ExPEC).